Here is a 395-residue protein sequence, read N- to C-terminus: MSNESGRFLFTSESVSMGHPDKLADRISDSILDALLAQDPHSRVACETLVTTGLAVIAGEISSKADVDYEKIVRDTIVAVGYDDPDIGIDGKTCEVQIRLDAQSPDIAQGVNSDEASGKDIGAGDQGLMFGYACKDTPELMPLPIALSHRIINRITEARFNKEVDWLRPDNKSQVTVEYDGNRPVRIEAVVVSAQHGPDVSHDEIEKFVIENVVKPSIPAELDKGDIKYHINPTGKFIIGGPHGDCGLTGRKIIVDTYGGWGRHGGGAFSGKDSTKVDRSAAYMARYVAKNIVAAGLAERCEVQLAYAIGVTEPVSVHVDTEGTGKIEDAKLCELIREHFPLTPGGIIDHLQLRRPVFVETTAGGHFGRDGEGFTWEKTDKADALAEAAGATATA.

ATP is bound at residue histidine 19. Residue aspartate 21 participates in Mg(2+) binding. Glutamate 47 contributes to the K(+) binding site. Residues glutamate 60 and glutamine 103 each coordinate L-methionine. Residues 103–113 form a flexible loop region; sequence QSPDIAQGVNS. Residues 170-172, 236-237, aspartate 245, 251-252, alanine 268, and lysine 272 each bind ATP; these read DNK, KF, and RK. Position 245 (aspartate 245) interacts with L-methionine. Lysine 276 lines the L-methionine pocket.

The protein belongs to the AdoMet synthase family. In terms of assembly, homotetramer; dimer of dimers. Mg(2+) serves as cofactor. K(+) is required as a cofactor.

It is found in the cytoplasm. The enzyme catalyses L-methionine + ATP + H2O = S-adenosyl-L-methionine + phosphate + diphosphate. It functions in the pathway amino-acid biosynthesis; S-adenosyl-L-methionine biosynthesis; S-adenosyl-L-methionine from L-methionine: step 1/1. Functionally, catalyzes the formation of S-adenosylmethionine (AdoMet) from methionine and ATP. The overall synthetic reaction is composed of two sequential steps, AdoMet formation and the subsequent tripolyphosphate hydrolysis which occurs prior to release of AdoMet from the enzyme. The polypeptide is S-adenosylmethionine synthase (Rhodopirellula baltica (strain DSM 10527 / NCIMB 13988 / SH1)).